The primary structure comprises 77 residues: Small ribosomal subunit protein bS18 (77 aa).

This sequence belongs to the bacterial ribosomal protein bS18 family. As to quaternary structure, part of the 30S ribosomal subunit. Forms a tight heterodimer with protein bS6.

Functionally, binds as a heterodimer with protein bS6 to the central domain of the 16S rRNA, where it helps stabilize the platform of the 30S subunit. The polypeptide is Small ribosomal subunit protein bS18 (Desulforamulus reducens (strain ATCC BAA-1160 / DSM 100696 / MI-1) (Desulfotomaculum reducens)).